A 329-amino-acid chain; its full sequence is Calponin-3 (329 aa).

An N6-acetyllysine modification is found at K23. The region spanning 26–130 is the Calponin-homology (CH) domain; the sequence is HQAEEDLRNW…TLVALAGLAK (105 aa). K158 bears the N6-methyllysine mark. 3 Calponin-like repeats span residues 164–189, 204–229, and 243–268; these read IGLQ…RHLY, ISLQ…RDIY, and ISLQ…RQVY. The interval 280-329 is disordered; the sequence is VIHNGSQGTGTNGSEISDSDYQAEYPDEYHGEYQDDYPRDYQYGDQGIDY. Basic and acidic residues predominate over residues 306–318; that stretch reads DEYHGEYQDDYPR.

The protein belongs to the calponin family.

Thin filament-associated protein that is implicated in the regulation and modulation of smooth muscle contraction. It is capable of binding to actin, calmodulin and tropomyosin. The interaction of calponin with actin inhibits the actomyosin Mg-ATPase activity. The protein is Calponin-3 (CNN3) of Bos taurus (Bovine).